A 610-amino-acid polypeptide reads, in one-letter code: Glutamine--fructose-6-phosphate aminotransferase [isomerizing] (610 aa).

Cys2 serves as the catalytic Nucleophile; for GATase activity. Residues 2–218 (CGIVGAVAQR…EGDVAEITRR (217 aa)) form the Glutamine amidotransferase type-2 domain. SIS domains follow at residues 286–426 (AAEI…QQGR) and 459–600 (LATD…VDQP). The active-site For Fru-6P isomerization activity is Lys605.

Homodimer.

It localises to the cytoplasm. The catalysed reaction is D-fructose 6-phosphate + L-glutamine = D-glucosamine 6-phosphate + L-glutamate. In terms of biological role, catalyzes the first step in hexosamine metabolism, converting fructose-6P into glucosamine-6P using glutamine as a nitrogen source. This chain is Glutamine--fructose-6-phosphate aminotransferase [isomerizing], found in Vibrio vulnificus (strain YJ016).